We begin with the raw amino-acid sequence, 364 residues long: Protein leg1a (364 aa).

A signal peptide spans 1 to 22 (MSEMGFLRSVAAVLLLAVFSHA). An N-linked (GlcNAc...) asparagine glycan is attached at asparagine 70.

The protein belongs to the LEG1 family. In terms of tissue distribution, detected in all tissues tested, with the highest levels in serum (at protein level). At mRNA level, only expressed in liver.

The protein localises to the secreted. In terms of biological role, important for early development of liver, exocrine pancreas and intestine, probably through cell cycle regulation. In liver, its function is partially redundant with leg1b function. This chain is Protein leg1a, found in Danio rerio (Zebrafish).